A 360-amino-acid polypeptide reads, in one-letter code: Cuticle collagen dpy-2 (360 aa).

3 triple-helical region regions span residues 123 to 152 (GERGPSGDSGLPALPGAPGPDGAPGRPGTT), 174 to 230 (GPRG…KGRT), and 238 to 303 (GPPG…PGTC). Disordered regions lie at residues 127 to 158 (PSGDSGLPALPGAPGPDGAPGRPGTTPNASCI) and 174 to 360 (GPRG…IRKW). Over residues 189-198 (GEYGIGGRPG) the composition is skewed to gly residues. Positions 242-258 (DSGLPGPWGPPGSAGMP) are enriched in low complexity. Residues 273–288 (PGPPGAPGPGGMPGPN) show a composition bias toward pro residues.

Belongs to the cuticular collagen family. Collagen polypeptide chains are complexed within the cuticle by disulfide bonds and other types of covalent cross-links.

In terms of biological role, nematode cuticles are composed largely of collagen-like proteins. The cuticle functions both as an exoskeleton and as a barrier to protect the worm from its environment. Mutations in dpy-2 affects the body shape. The sequence is that of Cuticle collagen dpy-2 (dpy-2) from Caenorhabditis elegans.